A 133-amino-acid polypeptide reads, in one-letter code: Small ribosomal subunit protein uS8 (133 aa).

The protein belongs to the universal ribosomal protein uS8 family. In terms of assembly, part of the 30S ribosomal subunit. Contacts proteins S5 and S12.

In terms of biological role, one of the primary rRNA binding proteins, it binds directly to 16S rRNA central domain where it helps coordinate assembly of the platform of the 30S subunit. The sequence is that of Small ribosomal subunit protein uS8 from Chlamydia trachomatis serovar A (strain ATCC VR-571B / DSM 19440 / HAR-13).